A 244-amino-acid chain; its full sequence is Venom nerve growth factor 2 (244 aa).

The signal sequence occupies residues 1-18; it reads MSMLCYTLIIAFLIGIWA. Residues 19–125 constitute a propeptide that is removed on maturation; it reads APKSEDNVPL…TLNRNIRAKR (107 aa). Residues 47–66 show a composition bias toward basic and acidic residues; sequence GLKTSRNTDQRHPAPKKAED. Residues 47-69 are disordered; the sequence is GLKTSRNTDQRHPAPKKAEDQEL. 2 disulfides stabilise this stretch: cysteine 139-cysteine 205 and cysteine 181-cysteine 233.

The protein belongs to the NGF-beta family. As to quaternary structure, homodimer; non-covalently linked. As to expression, expressed by the venom gland.

The protein localises to the secreted. Nerve growth factor is important for the development and maintenance of the sympathetic and sensory nervous systems. It stimulates division and differentiation of sympathetic and embryonic sensory neurons as well as basal forebrain cholinergic neurons in the brain. Its relevance in the snake venom is not clear. However, it has been shown to inhibit metalloproteinase-dependent proteolysis of platelet glycoprotein Ib alpha, suggesting a metalloproteinase inhibition to prevent metalloprotease autodigestion and/or protection against prey proteases. Binds a lipid between the two protein chains in the homodimer. The lipid-bound form promotes histamine relase from mouse mast cells, contrary to the lipid-free form. This Notechis scutatus scutatus (Mainland tiger snake) protein is Venom nerve growth factor 2.